Consider the following 338-residue polypeptide: Elongation factor Ts, mitochondrial (338 aa).

The transit peptide at methionine 1–serine 55 directs the protein to the mitochondrion. Lysine 89, lysine 146, and lysine 205 each carry N6-succinyllysine. The residue at position 283 (serine 283) is a Phosphoserine.

The protein belongs to the EF-Ts family.

It localises to the mitochondrion. In terms of biological role, associates with the EF-Tu.GDP complex and induces the exchange of GDP to GTP. It remains bound to the aminoacyl-tRNA.EF-Tu.GTP complex up to the GTP hydrolysis stage on the ribosome. This is Elongation factor Ts, mitochondrial from Bos taurus (Bovine).